Here is a 98-residue protein sequence, read N- to C-terminus: PE family immunomodulator PE35 (98 aa).

In terms of domain architecture, PE spans 1–90; that stretch reads MEKMSHDPIA…DVARTYSQID (90 aa).

It belongs to the mycobacterial PE family. In terms of assembly, interacts with PPE68. PE35/PPE68 complex interacts with human TLR2.

The protein resides in the secreted. Its subcellular location is the cell surface. Functionally, plays a major role in RD1-associated pathogenesis, and may contribute to the establishment and maintenance of M.tuberculosis infection. Together with PPE68, stimulates the secretion of IL-10 and MCP-1 from human macrophages, via the interaction with human Toll-like receptor 2 (TLR2). The sequence is that of PE family immunomodulator PE35 (PE35) from Mycobacterium tuberculosis (strain CDC 1551 / Oshkosh).